The sequence spans 587 residues: DNA ligase (587 aa).

Residues D32–D36, S84–L85, and D116 contribute to the NAD(+) site. Catalysis depends on K118, which acts as the N6-AMP-lysine intermediate. Residues R139, E176, K293, and K317 each contribute to the NAD(+) site. C411, C414, C429, and C435 together coordinate Zn(2+).

Belongs to the NAD-dependent DNA ligase family. LigA subfamily. Requires Mg(2+) as cofactor. The cofactor is Mn(2+).

It carries out the reaction NAD(+) + (deoxyribonucleotide)n-3'-hydroxyl + 5'-phospho-(deoxyribonucleotide)m = (deoxyribonucleotide)n+m + AMP + beta-nicotinamide D-nucleotide.. Its function is as follows. DNA ligase that catalyzes the formation of phosphodiester linkages between 5'-phosphoryl and 3'-hydroxyl groups in double-stranded DNA using NAD as a coenzyme and as the energy source for the reaction. It is essential for DNA replication and repair of damaged DNA. This is DNA ligase from Buchnera aphidicola subsp. Cinara cedri (strain Cc).